The sequence spans 308 residues: Putative S-adenosyl-L-methionine-dependent methyltransferase MAB_4584c (308 aa).

S-adenosyl-L-methionine contacts are provided by residues Asp-131 and Asp-160–Leu-161.

This sequence belongs to the UPF0677 family.

Functionally, exhibits S-adenosyl-L-methionine-dependent methyltransferase activity. The chain is Putative S-adenosyl-L-methionine-dependent methyltransferase MAB_4584c from Mycobacteroides abscessus (strain ATCC 19977 / DSM 44196 / CCUG 20993 / CIP 104536 / JCM 13569 / NCTC 13031 / TMC 1543 / L948) (Mycobacterium abscessus).